Reading from the N-terminus, the 218-residue chain is GEM-like protein 6 (218 aa).

The 79-residue stretch at 96 to 174 (KIYKRLFKVC…CKINGVNQSQ (79 aa)) folds into the GRAM domain.

This sequence belongs to the GEM family.

The polypeptide is GEM-like protein 6 (Arabidopsis thaliana (Mouse-ear cress)).